The chain runs to 356 residues: 3-dehydroquinate synthase (356 aa).

Residues 101–105, 125–126, Lys138, and Lys147 each bind NAD(+); these read GVIGD and TT. Zn(2+) contacts are provided by Glu180, His243, and His260.

It belongs to the sugar phosphate cyclases superfamily. Dehydroquinate synthase family. Co(2+) is required as a cofactor. It depends on Zn(2+) as a cofactor. The cofactor is NAD(+).

It localises to the cytoplasm. The catalysed reaction is 7-phospho-2-dehydro-3-deoxy-D-arabino-heptonate = 3-dehydroquinate + phosphate. The protein operates within metabolic intermediate biosynthesis; chorismate biosynthesis; chorismate from D-erythrose 4-phosphate and phosphoenolpyruvate: step 2/7. Functionally, catalyzes the conversion of 3-deoxy-D-arabino-heptulosonate 7-phosphate (DAHP) to dehydroquinate (DHQ). The protein is 3-dehydroquinate synthase of Alkaliphilus metalliredigens (strain QYMF).